Consider the following 227-residue polypeptide: Zinc finger protein ZAT10 (227 aa).

The C2H2-type 1 zinc-finger motif lies at 80–102 (YKCSVCDKTFSSYQALGGHKASH). Positions 96 to 128 (GGHKASHRKNLSQTLSGGGDDHSTSSATTTSAV) are disordered. Over residues 119–128 (TSSATTTSAV) the composition is skewed to low complexity. The C2H2-type 2 zinc-finger motif lies at 136-158 (HVCTICNKSFPSGQALGGHKRCH). The tract at residues 168–189 (SSVSNSEGAGSTSHVSSSHRGF) is disordered. Residues 174–186 (EGAGSTSHVSSSH) are compositionally biased toward polar residues.

In terms of tissue distribution, expressed in roots, stems and leaves.

The protein resides in the nucleus. In terms of biological role, transcriptional repressor involved in abiotic stress responses. Can repress the stress responsive genes DREB1A and LTI78. Probably involved in jasmonate (JA) early signaling response. May regulate the expression of the JA biosynthesis gene LOX3 and control the expression of TIFY10A/JAZ1, a key repressor in the JA signaling cascade. The protein is Zinc finger protein ZAT10 (ZAT10) of Arabidopsis thaliana (Mouse-ear cress).